Here is a 426-residue protein sequence, read N- to C-terminus: MLLTKEKNGMEIIEERESAVRSYSRSFPTVFEKAKDHLVWDVDGKEYIDFFAGAGSLNYGHNNEKMKTKIMDYVMNDGISHSLDMGTVARAEFLETFNEVILRPRNLDYKVMFPGPTGTNTVESALKIARKVTGRQNIISFTNAFHGMTLGSLSISGNSSIRNGAGVPLTNTISMPYDTFFKNGNAIDYLEQYLEDTGSGVDLPAAMILETVQGEGGINAASFEWLRGIEKLCRRYDILLIIDDVQAGCGRTGTFFSFEPAGIQPDIVCLSKSIGGYGLPLAITLIKPEHDIWEPGEHNGTFRGNNMAIVAATEALSYWKTDDLAKSVQKKSKIIKLRFEQIVEDYPELKATTRGRGFMQGIACGKGKEAYATKICAKAFEKGVIMETSGPSGEVVKFLGALTIDETSLIKGLGILEEATEEVVRQ.

Lys272 is modified (N6-(pyridoxal phosphate)lysine).

The protein belongs to the class-III pyridoxal-phosphate-dependent aminotransferase family. It depends on pyridoxal 5'-phosphate as a cofactor.

The catalysed reaction is L-2,4-diaminobutanoate + 2-oxoglutarate = L-aspartate 4-semialdehyde + L-glutamate. It participates in amine and polyamine biosynthesis; ectoine biosynthesis; L-ectoine from L-aspartate 4-semialdehyde: step 1/3. Catalyzes reversively the conversion of L-aspartate beta-semialdehyde (ASA) to L-2,4-diaminobutyrate (DABA) by transamination with L-glutamate. This Sporosarcina pasteurii (Bacillus pasteurii) protein is Diaminobutyrate--2-oxoglutarate transaminase (ectB).